Here is a 722-residue protein sequence, read N- to C-terminus: Probable cation-transporting ATPase HI_0290 (722 aa).

The HMA domain occupies 9–75 (KKISIQIGGM…IIHKTGFSAH (67 aa)). Cys20 and Cys23 together coordinate a metal cation. 6 consecutive transmembrane segments (helical) span residues 94–114 (LIVLWIINIPFLIGMLGMIGG), 118–138 (LMLPPIWQFALASIVQLWLAI), 157–177 (VLVSTGTLTIYLYSAFMLFYH), 180–200 (HAMGHVYFEASVMVIGFVSLG), 340–360 (VFVPVVLVISLVTFALTYILT), and 373–393 (VLVIACPCALGLATPAAIMVG). Asp422 acts as the 4-aspartylphosphate intermediate in catalysis. A run of 4 helical transmembrane segments spans residues 523–543 (IWQIASIVAVSINDEPIGAFA), 608–628 (LGHIVAMVGDGINDAPALASA), 675–695 (LFFALIYNILGIPLAAFGFLS), and 697–717 (IIAGAAMALSSISVLMNALRL). Positions 617 and 621 each coordinate Mg(2+).

The protein belongs to the cation transport ATPase (P-type) (TC 3.A.3) family. Type IB subfamily.

The protein localises to the cell membrane. The enzyme catalyses ATP + H2O = ADP + phosphate + H(+). This chain is Probable cation-transporting ATPase HI_0290, found in Haemophilus influenzae (strain ATCC 51907 / DSM 11121 / KW20 / Rd).